Reading from the N-terminus, the 377-residue chain is Enoyl reductase cheB (377 aa).

Residues 18 to 361 are enoyl reductase (ER) domain; sequence GGSLVIARDV…REISAEKLVV (344 aa). 49–52 contacts NADP(+); it reads CDFK. 137–144 is a binding site for substrate; sequence PCCIATMG. Residues 173–176, 200–203, Tyr-218, 265–266, and Thr-283 contribute to the NADP(+) site; these read SSSV, SPKN, and LE. 285–289 contributes to the substrate binding site; the sequence is GAIII. 354 to 355 is an NADP(+) binding site; the sequence is IS.

This sequence belongs to the zinc-containing alcohol dehydrogenase family. Heme is required as a cofactor.

Its pathway is secondary metabolite biosynthesis. In terms of biological role, enoyl reductase; part of the gene cluster that mediates the biosynthesis of chaetoglobosin A which has a unique inhibitory activity against actin polymerization in mammalian cells. Chaetoglobosin A and its intermediates are involved in the morphological differentiation of C.globosum. The first step of the pathway is the synthesis of prochaetoglobosin I via condensation of one acetyl-CoA, 8 malonyl-CoA, and a L-tryptophan molecule by the PKS-NRPS hybrid synthetase cheA, followed by reduction of backbone double bond to install desired geometry by the enoyl reductase cheB. Further multiple oxidation steps performed by the cytochrome P450 monooxygenases cheE and cheG, as well as by the FAD-linked oxidoreductase cheF, lead to the formation of chaetoglobosin A. Depending on the order of action of these reductases, distinct intermediates can be identified. Within the pathway, the cytochrome P450 monooxygenase cheE catalyzes a stereospecific epoxidation on prochaetoglobosin I, cytoglobosin D, and chaetoglobosin J intermediates. The FAD-linked oxidoreductase cheF performs dehydrogenation of the C-20 hydroxyl groups in the 20-dihyrochaetoglobosin A and cytoglobosin D intermediates. Finally, the cytochrome P450 monooxygenase cheG can catalyze the stereospecific dihydroxylation of prochaetoglobosin I and prochaetoglobosin IV at C-19 and C-20, respectively. The Diels-Alderase cheD may play a role in the post-PKS-NRPS biosynthetic steps catalyzing Diels-Alder cyclization. This is Enoyl reductase cheB from Chaetomium globosum (strain ATCC 6205 / CBS 148.51 / DSM 1962 / NBRC 6347 / NRRL 1970) (Soil fungus).